The sequence spans 326 residues: MASLPILAITSGEPAGIGPELCAQLSRRDWPLRPVVLGDFELIRARAAGAAVVRAYMPDAPAAAGVLDVLHVPLNVAARPGRLDPANAGYVLALLDRAVHGCRSGEFGAIVTAPVHKGVINDAGVAFSGHTEYLAEHTGTPRVVMMLVGGGLRVALATTHLPLAAVPGAITPALLDETLRILHADLAGRFGLAAPRILVAGLNPHAGEGGHMGREEIDVIAPVLERLRGEGMRLVGPLPADTLFVPHTLGQGDAVLAMYHDQGLPVLKHASFGGGVNVTLGLPIIRTSVDHGTALDLAGTGRADPGSLFAAVELATAMVCNRDVAR.

Histidine 130 and threonine 131 together coordinate substrate. A divalent metal cation-binding residues include histidine 160, histidine 205, and histidine 260. Substrate is bound by residues lysine 268, asparagine 277, and arginine 286.

This sequence belongs to the PdxA family. In terms of assembly, homodimer. Zn(2+) serves as cofactor. Mg(2+) is required as a cofactor. The cofactor is Co(2+).

Its subcellular location is the cytoplasm. It carries out the reaction 4-(phosphooxy)-L-threonine + NAD(+) = 3-amino-2-oxopropyl phosphate + CO2 + NADH. The protein operates within cofactor biosynthesis; pyridoxine 5'-phosphate biosynthesis; pyridoxine 5'-phosphate from D-erythrose 4-phosphate: step 4/5. Functionally, catalyzes the NAD(P)-dependent oxidation of 4-(phosphooxy)-L-threonine (HTP) into 2-amino-3-oxo-4-(phosphooxy)butyric acid which spontaneously decarboxylates to form 3-amino-2-oxopropyl phosphate (AHAP). The protein is 4-hydroxythreonine-4-phosphate dehydrogenase of Aromatoleum aromaticum (strain DSM 19018 / LMG 30748 / EbN1) (Azoarcus sp. (strain EbN1)).